A 410-amino-acid chain; its full sequence is Killer cell immunoglobulin-like receptor 3DL3 (410 aa).

An N-terminal signal peptide occupies residues 1–25; the sequence is MSLMVVSMACVGFFLLEGPWPHVGG. At 26–322 the chain is on the extracellular side; the sequence is QDKPFLSAWP…VSVTGNSRHL (297 aa). Ig-like C2-type domains are found at residues 42–97, 137–197, and 237–295; these read GQHV…RCCS, GETV…RCFG, and GENV…RCFG. Disulfide bonds link C49–C95 and C144–C195. Residues N179, N239, and N273 are each glycosylated (N-linked (GlcNAc...) asparagine). An intrachain disulfide couples C244 to C293. A helical membrane pass occupies residues 323 to 343; the sequence is HVLIGTSVVIIPFAILLFFLL. The Cytoplasmic portion of the chain corresponds to 344–410; it reads HRWCANKKNA…PKTPPTDTSV (67 aa).

It belongs to the immunoglobulin superfamily.

Its subcellular location is the cell membrane. In terms of biological role, receptor on natural killer cells. May inhibit the activity of NK cells thus preventing cell lysis. The protein is Killer cell immunoglobulin-like receptor 3DL3 (KIR3DL3) of Homo sapiens (Human).